The chain runs to 533 residues: MAAAKAEMQLMSPLQISDPFGSFPHSPTMDNYPKLEEMMLLSNGAPQFLGAAGTPEGSGGNSSSSTSSGGGGGGGSNSGSSAFNPQGEPSEQPYEHLTTESFSDIALNNEKAMVETSYPSQTTRLPPITYTGRFSLEPAPNSGNTLWPEPLFSLVSGLVSMTNPPTSSSSAPSPAASSSSSASQSPPLSCAVPSNDSSPIYSAAPTFPTPNTDIFPEPQSQAFPGSAGTALQYPPPAYPATKGGFQVPMIPDYLFPQQQGDLSLGTPDQKPFQGLENRTQQPSLTPLSTIKAFATQSGSQDLKALNTTYQSQLIKPSRMRKYPNRPSKTPPHERPYACPVESCDRRFSRSDELTRHIRIHTGQKPFQCRICMRNFSRSDHLTTHIRTHTGEKPFACDICGRKFARSDERKRHTKIHLRQKDKKADKSVVASPAASSLSSYPSPVATSYPSPATTSFPSPVPTSYSSPGSSTYPSPAHSGFPSPSVATTFASVPPAFPTQVSSFPSAGVSSSFSTSTGLSDMTATFSPRTIEIC.

Disordered stretches follow at residues 1–94 (MAAA…EQPY) and 161–237 (MTNP…PPPA). Residues 68 to 77 (SGGGGGGGSN) are compositionally biased toward gly residues. Positions 164 to 189 (PPTSSSSAPSPAASSSSSASQSPPLS) are enriched in low complexity. Lys-303 is covalently cross-linked (Glycyl lysine isopeptide (Lys-Gly) (interchain with G-Cter in SUMO2)). The segment at 316–336 (PSRMRKYPNRPSKTPPHERPY) is disordered. C2H2-type zinc fingers lie at residues 336 to 360 (YACP…IRIH), 366 to 388 (FQCR…IRTH), and 394 to 416 (FACD…TKIH). The segment at 407–478 (DERKRHTKIH…SSTYPSPAHS (72 aa)) is disordered. The span at 411–421 (RHTKIHLRQKD) shows a compositional bias: basic residues. The span at 427–475 (SVVASPAASSLSSYPSPVATSYPSPATTSFPSPVPTSYSSPGSSTYPSP) shows a compositional bias: low complexity.

This sequence belongs to the EGR C2H2-type zinc-finger protein family. In terms of assembly, interacts with SNAI1 and SP1 upon 12-O-tetradecanoylphorbol-13-acetate (TPA) induction. In terms of tissue distribution, detected in lung vasculature and in mononuclear phagocytes. Detected in liver (at protein level). Expressed in the liver in a circadian manner.

It is found in the nucleus. The protein localises to the cytoplasm. Functionally, transcriptional regulator. Recognizes and binds to the DNA sequence 5'-GCG(T/G)GGGCG-3'(EGR-site) in the promoter region of target genes. Binds double-stranded target DNA, irrespective of the cytosine methylation status. Regulates the transcription of numerous target genes, and thereby plays an important role in regulating the response to growth factors, DNA damage, and ischemia. Plays a role in the regulation of cell survival, proliferation and cell death. Activates expression of p53/TP53 and TGFB1, and thereby helps prevent tumor formation. Required for normal progress through mitosis and normal proliferation of hepatocytes after partial hepatectomy. Mediates responses to ischemia and hypoxia; regulates the expression of proteins such as IL1B and CXCL2 that are involved in inflammatory processes and development of tissue damage after ischemia. Regulates biosynthesis of luteinizing hormone (LHB) in the pituitary. Regulates the amplitude of the expression rhythms of clock genes: BMAL1, PER2 and NR1D1 in the liver via the activation of PER1 (clock repressor) transcription. Regulates the rhythmic expression of core-clock gene BMAL1 in the suprachiasmatic nucleus (SCN). This is Early growth response protein 1 (Egr1) from Mus musculus (Mouse).